Here is a 374-residue protein sequence, read N- to C-terminus: Chaperone protein DnaJ (374 aa).

The J domain maps to 5-70; that stretch reads DYYDVLGVAK…DKRAAYDRFG (66 aa). The CR-type zinc finger occupies 131–209; the sequence is GCEEKIRIPT…CHGQGRVQEY (79 aa). Zn(2+)-binding residues include C144, C147, C161, C164, C183, C186, C197, and C200. CXXCXGXG motif repeat units follow at residues 144–151, 161–168, 183–190, and 197–204; these read CKTCDGSG, CGTCGGAG, CPECHGAG, and CRDCHGQG.

This sequence belongs to the DnaJ family. Homodimer. The cofactor is Zn(2+).

It localises to the cytoplasm. Its function is as follows. Participates actively in the response to hyperosmotic and heat shock by preventing the aggregation of stress-denatured proteins and by disaggregating proteins, also in an autonomous, DnaK-independent fashion. Unfolded proteins bind initially to DnaJ; upon interaction with the DnaJ-bound protein, DnaK hydrolyzes its bound ATP, resulting in the formation of a stable complex. GrpE releases ADP from DnaK; ATP binding to DnaK triggers the release of the substrate protein, thus completing the reaction cycle. Several rounds of ATP-dependent interactions between DnaJ, DnaK and GrpE are required for fully efficient folding. Also involved, together with DnaK and GrpE, in the DNA replication of plasmids through activation of initiation proteins. This is Chaperone protein DnaJ from Marinomonas sp. (strain MWYL1).